A 791-amino-acid chain; its full sequence is 1-phosphatidylinositol 4,5-bisphosphate phosphodiesterase delta-4 (791 aa).

Residues 16-124 enclose the PH domain; sequence LLMQKGTMMR…WMQGLQLLVG (109 aa). The tract at residues 26–53 is substrate binding; it reads KVRSKSWKKLRFFRLQDDGMTVWHARQA. EF-hand domains are found at residues 134–169, 170–205, and 207–237; these read RLDQWLSDWFQRGDKNQDGRMSFGEVQRLLHLMNVE, MDQEYAFQLFQTADTSQSGTLEGEEFVEFYKSLTQR, and EVQELFEKFSSDGQKLTLLEFVDFLQEEQKE. The Ca(2+) site is built by Asp-147, Asn-149, Asp-151, Arg-153, Glu-158, Asp-183, Ser-185, Ser-187, Thr-189, and Glu-194. The short motif at 213–243 is the GBA element; it reads EKFSSDGQKLTLLEFVDFLQEEQKEGERASD. The PI-PLC X-box domain occupies 290 to 435; the sequence is QDMTQPLNHY…LRGKILVKGK (146 aa). His-305 is a catalytic residue. Residues Asn-306, Glu-335, and Asp-337 each contribute to the Ca(2+) site. Residue His-350 is part of the active site. Position 384 (Glu-384) interacts with Ca(2+). Substrate is bound by residues Lys-433, Lys-435, Ser-551, and Arg-578. Residues 522-638 enclose the PI-PLC Y-box domain; it reads LSALVVYLKA…GYVLKPDFLR (117 aa). Residues 638-765 enclose the C2 domain; sequence RDAQSSFHPE…QGYRHIHLLS (128 aa). Ile-679, Asp-681, Asn-705, Asp-734, Tyr-735, and Asp-736 together coordinate Ca(2+). Positions 760–763 match the PDZ-binding motif; it reads HIHL.

Interacts with GRIP1. Interacts (via GBA motif) with guanine nucleotide-binding protein G(i) alpha subunit GNAI3 (inactive GDP-bound form); low-affinity interaction. It depends on Ca(2+) as a cofactor.

It localises to the membrane. Its subcellular location is the nucleus. The protein resides in the cytoplasm. The protein localises to the endoplasmic reticulum. The enzyme catalyses a 1,2-diacyl-sn-glycero-3-phospho-(1D-myo-inositol-4,5-bisphosphate) + H2O = 1D-myo-inositol 1,4,5-trisphosphate + a 1,2-diacyl-sn-glycerol + H(+). It catalyses the reaction a 1,2-diacyl-sn-glycero-3-phospho-(1D-myo-inositol) + H2O = 1D-myo-inositol 1-phosphate + a 1,2-diacyl-sn-glycerol + H(+). Hydrolyzes the phosphatidylinositol 4,5-bisphosphate (PIP2) to generate 2 second messenger molecules diacylglycerol (DAG) and inositol 1,4,5-trisphosphate (IP3). DAG mediates the activation of protein kinase C (PKC), while IP3 releases Ca(2+) from intracellular stores. Required for acrosome reaction in sperm during fertilization, probably by acting as an important enzyme for intracellular Ca(2+) mobilization in the zona pellucida-induced acrosome reaction. May play a role in cell growth. Modulates the liver regeneration in cooperation with nuclear PKC. Overexpression up-regulates the Erk signaling pathway and proliferation. In Bos taurus (Bovine), this protein is 1-phosphatidylinositol 4,5-bisphosphate phosphodiesterase delta-4 (PLCD4).